The chain runs to 184 residues: GTP-dependent dephospho-CoA kinase (184 aa).

Positions 33, 34, 52, 54, and 103 each coordinate GTP.

Belongs to the GTP-dependent DPCK family.

The enzyme catalyses 3'-dephospho-CoA + GTP = GDP + CoA + H(+). It functions in the pathway cofactor biosynthesis; coenzyme A biosynthesis. Catalyzes the GTP-dependent phosphorylation of the 3'-hydroxyl group of dephosphocoenzyme A to form coenzyme A (CoA). This is GTP-dependent dephospho-CoA kinase from Ignicoccus hospitalis (strain KIN4/I / DSM 18386 / JCM 14125).